The following is a 95-amino-acid chain: Large ribosomal subunit protein bL31 (95 aa).

The interval 68 to 95 (AGLNNINKKPEKKKIQGKSEPRKSLNEL) is disordered. A compositionally biased stretch (basic and acidic residues) spans 80 to 95 (KKIQGKSEPRKSLNEL).

Belongs to the bacterial ribosomal protein bL31 family. Type A subfamily. As to quaternary structure, part of the 50S ribosomal subunit.

Its function is as follows. Binds the 23S rRNA. The polypeptide is Large ribosomal subunit protein bL31 (Ureaplasma parvum serovar 3 (strain ATCC 700970)).